We begin with the raw amino-acid sequence, 914 residues long: Valine--tRNA ligase (914 aa).

A 'HIGH' region motif is present at residues 45-55 (PNVTGSLHMGH). A 'KMSKS' region motif is present at residues 538–542 (KMSKS). Residue Lys541 participates in ATP binding. Residues 847–914 (LVDLDALKGR…LARKRLADLS (68 aa)) adopt a coiled-coil conformation.

The protein belongs to the class-I aminoacyl-tRNA synthetase family. ValS type 1 subfamily. Monomer.

It localises to the cytoplasm. The enzyme catalyses tRNA(Val) + L-valine + ATP = L-valyl-tRNA(Val) + AMP + diphosphate. In terms of biological role, catalyzes the attachment of valine to tRNA(Val). As ValRS can inadvertently accommodate and process structurally similar amino acids such as threonine, to avoid such errors, it has a 'posttransfer' editing activity that hydrolyzes mischarged Thr-tRNA(Val) in a tRNA-dependent manner. This Parasynechococcus marenigrum (strain WH8102) protein is Valine--tRNA ligase.